The chain runs to 92 residues: Small ribosomal subunit protein uS19c (92 aa).

The protein belongs to the universal ribosomal protein uS19 family.

The protein localises to the plastid. It localises to the chloroplast. In terms of biological role, protein S19 forms a complex with S13 that binds strongly to the 16S ribosomal RNA. The chain is Small ribosomal subunit protein uS19c from Illicium oligandrum (Star anise).